The following is a 248-amino-acid chain: MAGHSQFKNIMHRKGRQDAMKSKLFGKLAREITVAAKLGTPDPAMNPRLRAAVVAARAENMPKDNIERAIKKALGGEGENYAEIRYEGYGPGGVAVIVEALTDNRNRAASDIRSYFTKSGGNLGETGSVSFMFDRVGIIEFDRSVASDDAVLDAAIEAGADDVISGEGGHEVYASPDSFHEVAKNLEAKFGEPRKAALTWKPQNTVSVDDETGEKLLKLMDLLNEHDDVQNVYANFEISDALMAKMGG.

Belongs to the TACO1 family.

It localises to the cytoplasm. The sequence is that of Probable transcriptional regulatory protein BBta_6910 from Bradyrhizobium sp. (strain BTAi1 / ATCC BAA-1182).